A 2179-amino-acid chain; its full sequence is Genome polyprotein (2179 aa).

Residues 1 to 20 (MGAQVSTQKSGSHENQNILT) are disordered. A lipid anchor (N-myristoyl glycine; by host) is attached at Gly2. Topologically, residues 2–1491 (GAQVSTQKSG…AMNQASMIIN (1490 aa)) are cytoplasmic. The amphipathic alpha-helix stretch occupies residues 564–584 (ALTEGLGDELEEVIVEKTKQT). Active-site for protease 2A activity residues include His876 and Asp894. Residues Cys911 and Cys913 each coordinate Zn(2+). The active-site For protease 2A activity is the Cys965. Residues Cys971 and His973 each coordinate Zn(2+). The interval 1101 to 1173 (NDGWFRKFND…HISNPTQEKR (73 aa)) is membrane-binding. The segment at 1101–1239 (NDGWFRKFND…TPGSGKSLTT (139 aa)) is oligomerization. Positions 1122–1126 (ANKIS) are RNA-binding. The SF3 helicase domain occupies 1205–1361 (KNKMVNYMQF…TTYTKNGKLN (157 aa)). Zn(2+) is bound by residues Cys1369, Cys1372, Cys1381, and Cys1386. The C4-type zinc finger occupies 1369-1386 (CKDCHQPSNFKKCCPLVC). Residues 1413–1420 (DFKSKMQI) form an RNA-binding region. Residues 1424–1429 (LETLFQ) are oligomerization. An intramembrane segment occupies 1492–1507 (TILMFVSTLGIVYVIY). At 1508 to 2179 (KLFAQTQGPY…VLRRRWLDLF (672 aa)) the chain is on the cytoplasmic side. The residue at position 1517 (Tyr1517) is an O-(5'-phospho-RNA)-tyrosine. Residues 1538–1715 (GPNTEFALSL…FSAQLKKQYF (178 aa)) form the Peptidase C3 domain. Residues His1577, Glu1608, and Cys1683 each act as for protease 3C activity in the active site. Positions 1946–2060 (GHLMAFDYSN…SYPYELDPQV (115 aa)) constitute a RdRp catalytic domain. Mg(2+) is bound by residues Asp1952 and Asp2046.

Belongs to the picornaviruses polyprotein family. As to quaternary structure, interacts with capsid protein VP1 and capsid protein VP3 to form heterotrimeric protomers. In terms of assembly, interacts with capsid protein VP0, and capsid protein VP3 to form heterotrimeric protomers. Five protomers subsequently associate to form pentamers which serve as building blocks for the capsid. Interacts with capsid protein VP2, capsid protein VP3 and capsid protein VP4 following cleavage of capsid protein VP0. Interacts with host ICAM1. Interacts with capsid protein VP1 and capsid protein VP3 in the mature capsid. As to quaternary structure, interacts with capsid protein VP0 and capsid protein VP1 to form heterotrimeric protomers. Five protomers subsequently associate to form pentamers which serve as building blocks for the capsid. Interacts with capsid protein VP4 in the mature capsid. Interacts with protein 2C; this interaction may be important for virion morphogenesis. In terms of assembly, interacts with capsid protein VP1 and capsid protein VP3. Homodimer. As to quaternary structure, homohexamer; forms a hexameric ring structure with 6-fold symmetry characteristic of AAA+ ATPases. Interacts (via N-terminus) with host RTN3 (via reticulon domain); this interaction is important for viral replication. Interacts with capsid protein VP3; this interaction may be important for virion morphogenesis. In terms of assembly, interacts with protein 3CD. Homodimer. Interacts with host GBF1. Interacts (via GOLD domain) with host ACBD3 (via GOLD domain); this interaction allows the formation of a viral protein 3A/ACBD3 heterotetramer with a 2:2 stoichiometry, which will stimulate the recruitment of host PI4KB in order to synthesize PI4P at the viral RNA replication sites. As to quaternary structure, interacts with RNA-directed RNA polymerase. In terms of assembly, interacts with protein 3AB and with RNA-directed RNA polymerase. Interacts with Viral protein genome-linked and with protein 3CD. Mg(2+) is required as a cofactor. Post-translationally, specific enzymatic cleavages in vivo by the viral proteases yield processing intermediates and the mature proteins. In terms of processing, myristoylation is required for the formation of pentamers during virus assembly. Further assembly of 12 pentamers and a molecule of genomic RNA generates the provirion. During virion maturation, immature virions are rendered infectious following cleavage of VP0 into VP4 and VP2. This maturation seems to be an autocatalytic event triggered by the presence of RNA in the capsid and it is followed by a conformational change infectious virion. Post-translationally, myristoylation is required during RNA encapsidation and formation of the mature virus particle. In terms of processing, VPg is uridylylated by the polymerase into VPg-pUpU. This acts as a nucleotide-peptide primer for the genomic RNA replication.

Its subcellular location is the virion. The protein resides in the host cytoplasm. The protein localises to the host cytoplasmic vesicle membrane. It localises to the host nucleus. It catalyses the reaction a ribonucleoside 5'-triphosphate + H2O = a ribonucleoside 5'-diphosphate + phosphate + H(+). The enzyme catalyses Selective cleavage of Tyr-|-Gly bond in the picornavirus polyprotein.. The catalysed reaction is RNA(n) + a ribonucleoside 5'-triphosphate = RNA(n+1) + diphosphate. It carries out the reaction Selective cleavage of Gln-|-Gly bond in the poliovirus polyprotein. In other picornavirus reactions Glu may be substituted for Gln, and Ser or Thr for Gly.. Its activity is regulated as follows. Replication or transcription is subject to high level of random mutations by the nucleotide analog ribavirin. In terms of biological role, forms an icosahedral capsid of pseudo T=3 symmetry with capsid proteins VP2 and VP3. The capsid is 300 Angstroms in diameter, composed of 60 copies of each capsid protein and enclosing the viral positive strand RNA genome. Capsid protein VP1 mainly forms the vertices of the capsid. Capsid protein VP1 interacts with host ICAM1 to provide virion attachment to target host cells. This attachment induces virion internalization. Tyrosine kinases are probably involved in the entry process. After binding to its receptor, the capsid undergoes conformational changes. Capsid protein VP1 N-terminus (that contains an amphipathic alpha-helix) and capsid protein VP4 are externalized. Together, they shape a pore in the host membrane through which viral genome is translocated to host cell cytoplasm. After genome has been released, the channel shrinks. Its function is as follows. Forms an icosahedral capsid of pseudo T=3 symmetry with capsid proteins VP2 and VP3. The capsid is 300 Angstroms in diameter, composed of 60 copies of each capsid protein and enclosing the viral positive strand RNA genome. Functionally, lies on the inner surface of the capsid shell. After binding to the host receptor, the capsid undergoes conformational changes. Capsid protein VP4 is released, Capsid protein VP1 N-terminus is externalized, and together, they shape a pore in the host membrane through which the viral genome is translocated into the host cell cytoplasm. Component of immature procapsids, which is cleaved into capsid proteins VP4 and VP2 after maturation. Allows the capsid to remain inactive before the maturation step. In terms of biological role, cysteine protease that cleaves viral polyprotein and specific host proteins. It is responsible for the autocatalytic cleavage between the P1 and P2 regions, which is the first cleavage occurring in the polyprotein. Also cleaves the host translation initiation factor EIF4G1, in order to shut down the capped cellular mRNA translation. Inhibits the host nucleus-cytoplasm protein and RNA trafficking by cleaving host members of the nuclear pores including NUP62 and NUP153. Counteracts stress granule formation probably by antagonizing its assembly or promoting its dissassembly. Its function is as follows. Plays an essential role in the virus replication cycle by acting as a viroporin. Creates a pore in the host endoplasmic reticulum and as a consequence releases Ca2+ in the cytoplasm of infected cell. In turn, high levels of cytoplasmic calcium may trigger membrane trafficking and transport of viral ER-associated proteins to viroplasms, sites of viral genome replication. Functionally, induces and associates with structural rearrangements of intracellular membranes. Displays RNA-binding, nucleotide binding and NTPase activities. May play a role in virion morphogenesis and viral RNA encapsidation by interacting with the capsid protein VP3. Localizes the viral replication complex to the surface of membranous vesicles. Together with protein 3CD binds the Cis-Active RNA Element (CRE) which is involved in RNA synthesis initiation. Acts as a cofactor to stimulate the activity of 3D polymerase, maybe through a nucleid acid chaperone activity. In terms of biological role, localizes the viral replication complex to the surface of membranous vesicles. It inhibits host cell endoplasmic reticulum-to-Golgi apparatus transport and causes the disassembly of the Golgi complex, possibly through GBF1 interaction. This would result in depletion of MHC, trail receptors and IFN receptors at the host cell surface. Plays an essential role in viral RNA replication by recruiting ACBD3 and PI4KB at the viral replication sites, thereby allowing the formation of the rearranged membranous structures where viral replication takes place. Its function is as follows. Acts as a primer for viral RNA replication and remains covalently bound to viral genomic RNA. VPg is uridylylated prior to priming replication into VPg-pUpU. The oriI viral genomic sequence may act as a template for this. The VPg-pUpU is then used as primer on the genomic RNA poly(A) by the RNA-dependent RNA polymerase to replicate the viral genome. During genome replication, the VPg-RNA linkage is removed by the host TDP2, thereby accelerating replication. During the late stage of the replication cycle, host TDP2 is excluded from sites of viral RNA synthesis and encapsidation, allowing for the generation of progeny virions. Functionally, involved in the viral replication complex and viral polypeptide maturation. It exhibits protease activity with a specificity and catalytic efficiency that is different from protease 3C. Protein 3CD lacks polymerase activity. Protein 3CD binds to the 5'UTR of the viral genome. Major viral protease that mediates proteolytic processing of the polyprotein. Cleaves host EIF5B, contributing to host translation shutoff. Cleaves also host PABPC1, contributing to host translation shutoff. Cleaves host NLRP1, triggers host N-glycine-mediated degradation of the autoinhibitory NLRP1 N-terminal fragment. In terms of biological role, replicates the viral genomic RNA on the surface of intracellular membranes. May form linear arrays of subunits that propagate along a strong head-to-tail interaction called interface-I. Covalently attaches UMP to a tyrosine of VPg, which is used to prime RNA synthesis. The positive stranded RNA genome is first replicated at virus induced membranous vesicles, creating a dsRNA genomic replication form. This dsRNA is then used as template to synthesize positive stranded RNA genomes. ss(+)RNA genomes are either translated, replicated or encapsidated. The polypeptide is Genome polyprotein (Homo sapiens (Human)).